The primary structure comprises 273 residues: 2,3,4,5-tetrahydropyridine-2,6-dicarboxylate N-succinyltransferase (273 aa).

The substrate site is built by Arg-104 and Asp-141.

This sequence belongs to the transferase hexapeptide repeat family. In terms of assembly, homotrimer.

The protein localises to the cytoplasm. It carries out the reaction (S)-2,3,4,5-tetrahydrodipicolinate + succinyl-CoA + H2O = (S)-2-succinylamino-6-oxoheptanedioate + CoA. The protein operates within amino-acid biosynthesis; L-lysine biosynthesis via DAP pathway; LL-2,6-diaminopimelate from (S)-tetrahydrodipicolinate (succinylase route): step 1/3. The protein is 2,3,4,5-tetrahydropyridine-2,6-dicarboxylate N-succinyltransferase of Thioalkalivibrio sulfidiphilus (strain HL-EbGR7).